The primary structure comprises 420 residues: Forkhead box protein I3 (420 aa).

3 disordered regions span residues 103-122 (GCSQ…SPAA), 234-306 (FRRK…GPML), and 364-396 (DTLQ…GQSS). The segment covering 108–122 (PFAQPAPAAPASPAA) has biased composition (low complexity). A Phosphoserine modification is found at Ser119. Positions 145 to 239 (RPPYSYSALI…DNGNFRRKRK (95 aa)) form a DNA-binding region, fork-head. The Nuclear localization signal motif lies at 235–241 (RRKRKRR). 3 positions are modified to phosphoserine: Ser277, Ser285, and Ser287. The span at 294–306 (TKSTASSPGGPML) shows a compositional bias: polar residues. The 9aaTAD motif lies at 406-414 (SMVNSLIYP).

In terms of processing, phosphorylation promotes the transcription factor activity. Dephosphorylation by protein phosphatase 2A (PP2A) reduces its activity.

It is found in the nucleus. Its function is as follows. Transcription factor required for pharyngeal arch development, which is involved in hair, ear, jaw and dental development. May act as a pioneer transcription factor during pharyngeal arch development. Required for epithelial cell differentiation within the epidermis. Acts at multiple stages of otic placode induction: necessary for preplacodal ectoderm to execute an inner ear program. Required for hair follicle stem cell specification. Acts downstream of TBX1 for the formation of the thymus and parathyroid glands from the third pharyngeal pouch. The chain is Forkhead box protein I3 from Homo sapiens (Human).